We begin with the raw amino-acid sequence, 3330 residues long: MAVALGRAPRSLPLLLTLLLLLLLRMSPSWSVVGQDHPMSSRSLHPPYFNLAQAARIWATATCGERDPEVSRPRPELFCKLVGGPAAQGSGHTIQGQFCDYCNSEDSRKAHPASHAIDGSERWWQSPPLSSGTQYNQVNLTLDLGQLFHVAYILIKFANSPRPDLWILERSVDFGSTYSPWQYFAHSRRDCVEQFGQEANMAITQDDQMLCVTEYSRIVPLENGEIVVSLINGRPGAKKFAFSDTLREFTKATNIRLRFLRTNTLLGHLISKAERDPTVTRRYYYSIKDISVGGRCVCNGHAEACSADNPEKQFRCECQHHTCGDTCNRCCAGYNQRRWQPAGQEQHNECEACNCHGHAVDCYYDPDVEHQQASLNSKGVYAGGGVCINCQHNTAGVNCEKCAKGYFRPHGVPVDALHGCIPCSCDPERADDCDQGSGHCHCKPNFSGDYCETCADGYYNFPFCLRIPVFPNYTPSPEDPVAGNIKGCDCNLEGVLPEICDDRGRCLCRPGVEGPQCDSCRSGSYSFPICQACQCSTIGSYPVPCDPGNGQCDCLPGITGRQCDRCLSGAYDFPYCQGSGSVCHPAGTLDSSLGYCQCKQHVASPTCSVCKPLYWNLAKENPRGCSECQCHEAGTLSGIGECGQEDGDCSCKAHVTGDACDTCEDGFFSLEKSNYFGCQGCQCDIGGALTTMCSGPSGVCQCREHVEGKQCQRPENNYYFPDLHHMKYEVEDGTGPNGRNLRFGFDPLVFPEFSWRGYAPMTSVQNEVRVRLSVRQSSLSLFRIVLRYISPGTEAISGRITLYSSQGDSDALQSRKITFPPSKEPAFVTVPGNGFAGPFSITPGTWIACIQVEGVLLDYLVLLPRDYYEAFTLQVPVTEPCAHTGSPQDNCLLYQHLPLTAFSCTLACEARHFLLDGELRPLAMRQPTPTHPAMVDLSGREVELQLRLRVPQVGHYVVLLEYATEVEQLFVVDVNLKSSGSALAGQVNIYSCKYSIPCRSVVIDSLSRTAVHELLADADIQLKAHMAHFLLYHICIIPAEEFSTEYLRPQVHCIASYRQHANPSASCVSLAHETPPTASILDATSRGLFSALPHEPSSPADGVTLKAPQSQVTLKGLIPHLGRHVFVIHFYQAEHPGFPTEVIVNGGRQWSGSFLASFCPHLLGCRDQVISDGQVEFDISEAEVAVTVKIPDGKSLTLVRVLVVPAENYDYQILHKTTVDKSSEFISSCGGDSFYIDPQAASGFCKNSARSLVAFYHNGAIPCECDPAGTAGHHCSPEGGQCPCRPNVIGRQCSRCATGYYGFPYCKPCNCGRRLCEEVTGKCLCPPHTVRPQCEVCEMNSFNFHPVAGCDVCNCSRKGTIEAAVSECDRDSGQCRCKPRVTGQQCDKCAPGFYQFPECVPCSCNRDGTEPSVCDPETGACMCKENVEGPQCQLCREGSFYLDPTNPKGCTKCFCFGVNTDCQSSHKQRAKFVDMMGWRLETADGVDVPVSFNPGSNSMVADLQELPPSVHSASWVAPPSYLGDKVSSYGGYLTYHAKSFGLPGDMVLLGKQPDVQLTGQHMSLIHKEPSDPRPDRLHHGRVQVIEGNFRHEGSSAPVSREELMTVLSRLERLHIRGLHFTETQRLTLGEVGLEEASDTGSGPRAHLVEMCACPPDYTGDSCQGCRPGYYWDNKSLPVGRCVPCNCNGHSNRCQDGSGICINCQHNTAGEHCERCQAGHYGNAIHGSCRVCPCPHTNSFATGCAVDGGAVRCACKPGYTGTQCERCAPGYFGNPQKFGGSCQPCNCNSNGQLGPCDPLTGDCVNQEPKDGSPAEECDDCDSCVMTLLNDLASMGEELRLVKSKLQGLSVSTGALEQIRHMETQAKDLRNQLLGFRSATSSHGSKMDDLEKELSHLNREFETLQEKAQVNSRKAQTLYNNIDQTIQSAKELDMKIKNIVQNVHILLKQMARPGGEGTDLPVGDWSRELAEAQRMMRDLRSRDFKKHLQEAEAEKMEAQLLLHRIRTWLESHQVENNGLLKNIRDSLNDYEDKLQDLRSILQEAAAQAKQATGINHENEGVLGAIQRQMKEMDSLKNDFTKYLATADSSLLQTNNLLQQMDKSQKEYESLAAALNGARQELSDRVRELSRSGGKAPLVVEAEKHAQSLQELAKQLEEIKRNTSGDELVRCAVDAATAYENILNAIRAAEDAASKATSASKSAFQTVIKEDLPKRAKTLSSDSEELLNEAKMTQKRLQQVSPALNSLQQTLKTVSVQKDLLDANLTVARDDLHGIQRGDIDSVVIGAKSMVREANGITSEVLDGLNPIQTDLGRIKDSYESARREDFSKALVDANNSVKKLTRKLPDLFIKIESINQQLLPLGNISDNVDRIRELIQQARDAANKVAIPMRFNGKSGVEVRLPNDLEDLKGYTSLSLFLQRPDLRENGGTEDMFVMYLGNKDASKDYIGMAVVDGQLTCVYNLGDREAEVQIDQVLTESESQEAVMDRVKFQRIYQFAKLNYTKEATSTKPKAPGVYDMESASSNTLLNLDPENAVFYVGGYPPGFELPRRLRFPPYKGCIELDDLNENVLSLYNFKTTFNLNTTEVEPCRRRKEESDKNYFEGTGYARIPTQPNAPFPNFMQTIQTTVDRGLLFFAENQDNFISLNIEDGNLMVKYKLNSEPPKEKGIRDTINNGRDHMILISIGKSQKRMLINMNKHSIIIEGEIFDFSTYYLGGIPIAIRERFNISTPAFQGCMKNLKKTSGVVRLNDTVGVTKKCSEDWKLVRTASFSRGGQMSFTNLDVPSLDRFQLSFGFQTFQPSGTLLNHQTRTSSLLVTLEDGHIALSTRDSSSPIFKSPGTYMDGLLHHVSVISDTSGLRLLIDDQVLRRNQRLASFSNAQQSLSMGGGYFEGCISNVFVQRMSQSPEVLDMASKSTKRDAFLGGCSLNKPPFLMLFKSPKGFNKARSFNVNQLLQDAPQAARSIEAWQDGKSCLPPLNTKATHRALQFGDSPTSHLLFKLPQELLKPRLQFSLDIQTTSSRGLVFHTGTRDSFVALYLSEGHVIFALGAGGKKLRLRSKERYHDGKWHSVVFGLSGRKVHLVVDGLRAQEGSLPGNSTISPREQVYLGLSPSRKSKSLPQHSFVGCLRNFQLDSKPLDSPSARSGVSPCLGGSLEKGIYFSQGGGHVVLANSVSLEPALTLTLSIRPRSLTGVLIHIASQSGEHLSVYMEAGKVTTSMNSEAGGTVTSITPKRSLCDGQWHSVTVSIKQHTLHLELDTDNSYTAGQLSFPPNSTRGSLHIGGVPDKLKMLTLPVWNSFFGCLKNIQVNHIPVPITEATDVQGSVSLNGCPDH.

The first 31 residues, 1–31, serve as a signal peptide directing secretion; it reads MAVALGRAPRSLPLLLTLLLLLLLRMSPSWS. In terms of domain architecture, Laminin N-terminal spans 40 to 295; sequence SSRSLHPPYF…SIKDISVGGR (256 aa). Asn-139 carries N-linked (GlcNAc...) asparagine glycosylation. A domain V region spans residues 295–725; it reads RCVCNGHAEA…NNYYFPDLHH (431 aa). 27 disulfides stabilise this stretch: Cys-296/Cys-305, Cys-298/Cys-316, Cys-318/Cys-327, Cys-330/Cys-350, Cys-353/Cys-362, Cys-355/Cys-387, Cys-390/Cys-399, Cys-402/Cys-420, Cys-423/Cys-433, Cys-425/Cys-440, Cys-442/Cys-451, Cys-454/Cys-464, Cys-488/Cys-500, Cys-490/Cys-506, Cys-508/Cys-517, Cys-520/Cys-530, Cys-533/Cys-545, Cys-535/Cys-552, Cys-554/Cys-563, Cys-566/Cys-583, Cys-628/Cys-642, Cys-630/Cys-649, Cys-651/Cys-660, Cys-663/Cys-678, Cys-681/Cys-693, Cys-683/Cys-700, and Cys-702/Cys-711. Laminin EGF-like domains lie at 296-350, 353-420, 423-464, 488-530, 533-576, 582-625, 628-678, and 681-725; these read CVCN…HNEC, CNCH…LHGC, CSCD…FPFC, CDCN…FPIC, CQCS…FPYC, VCHP…PRGC, CQCH…YFGC, and CQCD…DLHH. Asn-445 carries an N-linked (GlcNAc...) asparagine glycan. The segment at 793–1262 is domain IV 1 (domain IV B); that stretch reads TEAISGRITL…VAFYHNGAIP (470 aa). Residues 1263–1462 form a domain III B region; that stretch reads CECDPAGTAG…CFCFGVNTDC (200 aa). 12 disulfides stabilise this stretch: Cys-1309-Cys-1316, Cys-1311-Cys-1323, Cys-1325-Cys-1334, Cys-1337-Cys-1350, Cys-1353-Cys-1368, Cys-1355-Cys-1375, Cys-1377-Cys-1386, Cys-1389-Cys-1399, Cys-1402-Cys-1414, Cys-1404-Cys-1421, Cys-1423-Cys-1432, and Cys-1435-Cys-1450. Laminin EGF-like domains are found at residues 1309 to 1352, 1353 to 1401, and 1402 to 1452; these read CNCG…GCDV, CNCS…ECVP, and CSCN…GCTK. Asn-1354 carries N-linked (GlcNAc...) asparagine glycosylation. Positions 1453-1462 constitute a Laminin EGF-like 12; first part domain; sequence CFCFGVNTDC. The region spanning 1466–1650 is the Laminin IV type A domain; it reads HKQRAKFVDM…SGPRAHLVEM (185 aa). The Laminin EGF-like 12; second part domain maps to 1651-1683; it reads CACPPDYTGDSCQGCRPGYYWDNKSLPVGRCVP. The tract at residues 1651–1818 is domain III A; it reads CACPPDYTGD…DGSPAEECDD (168 aa). The N-linked (GlcNAc...) asparagine glycan is linked to Asn-1673. Disulfide bonds link Cys-1684–Cys-1693, Cys-1686–Cys-1700, Cys-1703–Cys-1712, Cys-1715–Cys-1728, Cys-1731–Cys-1743, Cys-1733–Cys-1752, Cys-1754–Cys-1763, and Cys-1766–Cys-1781. 2 consecutive Laminin EGF-like domains span residues 1684-1730 and 1731-1783; these read CNCN…SCRV and CPCP…SCQP. In terms of domain architecture, Laminin EGF-like 15; truncated spans 1784–1818; sequence CNCNSNGQLGPCDPLTGDCVNQEPKDGSPAEECDD. The segment at 1819 to 2385 is domain II and I; it reads CDSCVMTLLN…ARDAANKVAI (567 aa). Coiled coils occupy residues 1851–1980, 2012–2057, 2088–2165, and 2211–2238; these read TGAL…LRSR, VENN…HENE, LLQT…GDEL, and KRAKTLSSDSEELLNEAKMTQKRLQQVS. A glycan (N-linked (GlcNAc...) asparagine) is linked at Asn-2159. Asn-2261 is a glycosylation site (N-linked (GlcNAc...) asparagine). The Cell attachment site motif lies at 2274–2276; that stretch reads RGD. Residues 2318–2383 are a coiled coil; sequence SARREDFSKA…QQARDAANKV (66 aa). 5 N-linked (GlcNAc...) asparagine glycosylation sites follow: Asn-2332, Asn-2361, Asn-2498, Asn-2580, and Asn-2747. 5 Laminin G-like domains span residues 2386–2587, 2594–2756, 2763–2923, 2983–3147, and 3154–3327; these read PMRF…VEPC, SDKN…TKKC, VRTA…LGGC, ALQF…VSPC, and KGIY…LNGC. Intrachain disulfides connect Cys-2557/Cys-2587, Cys-2733/Cys-2756, and Cys-2891/Cys-2923. An N-linked (GlcNAc...) asparagine glycan is attached at Asn-3094. A disulfide bridge links Cys-3124 with Cys-3147. A glycan (N-linked (GlcNAc...) asparagine) is linked at Asn-3270. Residues Cys-3299 and Cys-3327 are joined by a disulfide bond.

Laminin is a complex glycoprotein, consisting of three different polypeptide chains (alpha, beta, gamma), which are bound to each other by disulfide bonds into a cross-shaped molecule comprising one long and three short arms with globules at each end. Alpha-3 is a subunit of laminin-5 (laminin-332 or epiligrin/kalinin/nicein), laminin-6 (laminin-311 or K-laminin) and laminin-7 (laminin-321 or KS-laminin). In terms of tissue distribution, basal membrane of the upper alimentary tract and urinary and nasal epithelia, salivary glands and teeth (both variants). Isoform A is predominantly expressed in skin, hair follicles and developing neurons of the trigeminal ganglion. Isoform B was found in bronchi, alveoli, stomach, intestinal crypts, whisker pads, CNS, telencephalic neuroectoderm, thalamus, Rathke pouch and periventricular subependymal germinal layer.

The protein localises to the secreted. The protein resides in the extracellular space. It localises to the extracellular matrix. Its subcellular location is the basement membrane. In terms of biological role, binding to cells via a high affinity receptor, laminin is thought to mediate the attachment, migration and organization of cells into tissues during embryonic development by interacting with other extracellular matrix components. Laminin-5 is thought to be involved in (1) cell adhesion via integrin alpha-3/beta-1 in focal adhesion and integrin alpha-6/beta-4 in hemidesmosomes, (2) signal transduction via tyrosine phosphorylation of pp125-FAK and p80, (3) differentiation of keratinocytes. This chain is Laminin subunit alpha-3 (Lama3), found in Mus musculus (Mouse).